The sequence spans 1875 residues: Neuron navigator 1 (1875 aa).

Position 1 is an N-acetylmethionine (M1). Residues 1–63 are disordered; sequence MLGSSVKSVQ…GGSGSMAKAS (63 aa). A phosphoserine mark is found at S93 and S145. 2 disordered regions span residues 115–230 and 280–339; these read SDDM…EERA and SSLR…VGGS. Phosphothreonine is present on T162. Residues S197 and S202 each carry the phosphoserine modification. Residues 258 to 283 adopt a coiled-coil conformation; that stretch reads ESQRKRTVQNVLDLRQNLEETMSSLR. Polar residues predominate over residues 280-291; it reads SSLRGSQVTHSS. A phosphoserine mark is found at S299, S311, S315, S365, and S394. Positions 304-318 are enriched in low complexity; it reads PRSVSSLSNRSSPLS. 2 disordered regions span residues 391–463 and 477–783; these read GYMS…RTDS and SESE…AELP. Composition is skewed to low complexity over residues 414–428 and 436–456; these read DESS…DASD and NASS…RSST. S455, S477, S479, and S493 each carry phosphoserine. Positions 479–489 are enriched in basic and acidic residues; the sequence is SEEKTPKKLEY. The span at 506–522 shows a compositional bias: basic and acidic residues; that stretch reads ERPESCDDASKGGELKK. At S531 the chain carries Phosphoserine. T537 carries the post-translational modification Phosphothreonine. The residue at position 544 (S544) is a Phosphoserine. Phosphothreonine is present on T547. The span at 558–569 shows a compositional bias: basic and acidic residues; that stretch reads GKPEGKATDKGK. T575 carries the post-translational modification Phosphothreonine. Over residues 584–594 the composition is skewed to basic and acidic residues; that stretch reads AGRDRLSDAKK. Composition is skewed to polar residues over residues 618 to 638 and 648 to 658; these read GTAT…QKSS and RKTSLDVSNSV. S651 carries the post-translational modification Phosphoserine. R690 carries the post-translational modification Omega-N-methylarginine. Polar residues-rich tracts occupy residues 696–712 and 726–735; these read VSSS…QGGL and GRSTPAPVNQ. The stretch at 733 to 758 forms a coiled coil; that stretch reads VNQTDREKEKAKAKAVALDSDNISLK. S752, S756, S762, S799, and S810 each carry phosphoserine. The segment covering 753–772 has biased composition (polar residues); that stretch reads DNISLKSIGSPESTPKNQAS. Disordered regions lie at residues 800-840 and 893-982; these read LANL…PLPS and MSLP…SPPA. Low complexity-rich tracts occupy residues 807–818 and 893–902; these read NSNSLDLPSSSD and MSLPSAFPSS. At S998 the chain carries Phosphoserine. Residue T1004 is modified to Phosphothreonine. The stretch at 1070–1161 forms a coiled coil; the sequence is SSAEERMQSE…SEAQAVIQGA (92 aa). Phosphothreonine is present on T1168. 4 disordered regions span residues 1172 to 1202, 1242 to 1306, 1359 to 1381, and 1808 to 1841; these read LRIK…KDAD, ATPD…KEVS, VAPG…LSSP, and KLYH…SLDS. S1179 carries the post-translational modification Phosphoserine. Low complexity predominate over residues 1179–1198; the sequence is SSDSISSLNSITSHSSIGSS. The span at 1244-1259 shows a compositional bias: polar residues; it reads PDSSAPSSPKLQHGST. Residues 1260–1281 are compositionally biased toward low complexity; that stretch reads ETASPSIKSSTSSSVGTEVTET. S1263 is subject to Phosphoserine. A coiled-coil region spans residues 1301-1360; it reads EKKEVSELRSELWEKEMKLTDIRLEALNSAHQLDQLRETMHNMQLEVDLLKAENDRLKVA. Residues 1365–1381 show a composition bias toward polar residues; sequence SGCTPGQVPGSSALSSP. A Phosphoserine modification is found at S1380.

Belongs to the Nav/unc-53 family. In terms of assembly, interacts with tubulin. As to expression, expressed in heart and brain. Present in brain (at protein level). In adult brain, found almost exclusively in areas of secondary neurogenesis from the hippocampus and the subventricular zone.

The protein localises to the cytoplasm. It is found in the cytoskeleton. May be involved in neuronal migration. The protein is Neuron navigator 1 (Nav1) of Mus musculus (Mouse).